Here is a 148-residue protein sequence, read N- to C-terminus: Cytochrome c-type biogenesis protein CcmE (148 aa).

Residues 1–7 (MKPRSKR) are Cytoplasmic-facing. A helical; Signal-anchor for type II membrane protein transmembrane segment spans residues 8–28 (LLLVAGAVALLVGAVALVLNA). The Periplasmic segment spans residues 29–148 (FQQNLVFFHT…AQKAAQTVQQ (120 aa)). Heme contacts are provided by histidine 123 and tyrosine 127.

Belongs to the CcmE/CycJ family.

The protein resides in the cell inner membrane. In terms of biological role, heme chaperone required for the biogenesis of c-type cytochromes. Transiently binds heme delivered by CcmC and transfers the heme to apo-cytochromes in a process facilitated by CcmF and CcmH. The chain is Cytochrome c-type biogenesis protein CcmE from Aromatoleum aromaticum (strain DSM 19018 / LMG 30748 / EbN1) (Azoarcus sp. (strain EbN1)).